A 537-amino-acid polypeptide reads, in one-letter code: Lysosomal cobalamin transport escort protein LMBD1 (537 aa).

The Extracellular segment spans residues 1–7 (MAAAAAE). The helical transmembrane segment at 8–28 (LVIGWCIFGLLLLAILAFCWV) threads the bilayer. The Cytoplasmic segment spans residues 29–47 (YVRKYQSQRESEVVSTVTA). The chain crosses the membrane as a helical span at residues 48–68 (IFSLAVALITSALLPVDIFLV). Over 69 to 97 (SYMKNQNGTFKDWADANVTVQIENTVLYG) the chain is Extracellular. N-linked (GlcNAc...) asparagine glycans are attached at residues Asn75 and Asn85. The chain crosses the membrane as a helical span at residues 98-118 (YYTLYSVILFCVFFWIPFVYF). Residues 119 to 141 (YYEEKDEDDASKCTQIKTALKYT) are Cytoplasmic-facing. A helical membrane pass occupies residues 142-162 (LGFVVICALLLLVGAFVPLHL). Residues 163–185 (PNNNNSTEWEKVKLLFEDLGTGQ) lie on the Extracellular side of the membrane. N-linked (GlcNAc...) asparagine glycosylation is found at Asn166 and Asn167. The chain crosses the membrane as a helical span at residues 186–206 (GLAALSFSISSLTLIGMLAAI). Residues 207-302 (TYTAYGMSAL…KFCGALRPLK (96 aa)) lie on the Cytoplasmic side of the membrane. The short motif at 229–232 (YERL) is the YERL motif; mediates interaction with adapter protein complex 2 and is essential for its function in clathrin-mediated endocytosis of INSR element. Thr235 is modified (phosphothreonine). The WTKF motif; mediates interaction with adapter protein complex 2 and is essential for its function in clathrin-mediated endocytosis of INSR motif lies at 291-294 (WTKF). Residues 303–323 (IIWGIFFILVALLFVISLFLS) form a helical membrane-spanning segment. Residues 324 to 361 (NLDKALHSAGIDSGFIIFGTNLSNPLNMLLPLLQTVFP) lie on the Extracellular side of the membrane. N-linked (GlcNAc...) asparagine glycosylation occurs at Asn344. The helical transmembrane segment at 362 to 382 (LDYILITIIIMYFIFTSMAGI) threads the bilayer. Over 383-405 (RNIGIWFFWIRLYKIRRGRTRPQ) the chain is Cytoplasmic. The helical transmembrane segment at 406–426 (ALLFLCMILLLIVLHTSYMIY) threads the bilayer. At 427–483 (SLAPQYVMYGSQNYLIESNITSDAHKGNSTLAVPKRCDADAPKDQCTVTRTYIFLHK) the chain is on the extracellular side. Residues Asn445 and Asn454 are each glycosylated (N-linked (GlcNAc...) asparagine). Residues 484-504 (FWFFSAAYYFGNWAFLVVFLI) traverse the membrane as a helical segment. At 505–537 (GLIVSCCKGKKSVIEGVDEDSDLSDDEPSAYSA) the chain is on the cytoplasmic side. A phosphoserine mark is found at Ser525 and Ser528.

This sequence belongs to the LIMR family. LMBRD1 subfamily. In terms of assembly, interacts with ABCD4; this interaction induces the translocation of ABCD4 from the endoplasmic reticulum to the lysosome. Interacts with ABCD4 and MMACHC; this interaction ensures the transport of cobalamin from the lysosome to the cytoplasm. Interacts with INSR, adapter protein complex 2 and clathrin heavy chain. N-glycosylated.

It localises to the endoplasmic reticulum membrane. The protein resides in the lysosome membrane. The protein localises to the cell membrane. It is found in the cytoplasmic vesicle. Its subcellular location is the clathrin-coated vesicle. In terms of biological role, lysosomal membrane chaperone required to export cobalamin (vitamin B12) from the lysosome to the cytosol, allowing its conversion to cofactors. Targets ABCD4 transporter from the endoplasmic reticulum to the lysosome. Then forms a complex with lysosomal ABCD4 and cytoplasmic MMACHC to transport cobalamin across the lysosomal membrane. Acts as an adapter protein which plays an important role in mediating and regulating the internalization of the insulin receptor (INSR). Involved in clathrin-mediated endocytosis of INSR via its interaction with adapter protein complex 2. Essential for the initiation of gastrulation and early formation of mesoderm structures during embryogenesis. The chain is Lysosomal cobalamin transport escort protein LMBD1 from Mus musculus (Mouse).